Reading from the N-terminus, the 221-residue chain is Glycerol metabolism activator (221 aa).

One can recognise a Response regulatory domain in the interval 3–120; it reads KILIADDHPL…QMTDAIEQIL (118 aa). Asp55 bears the 4-aspartylphosphate mark. Residues 149-214 enclose the HTH luxR-type domain; the sequence is APELLQALTR…QAILSAGDID (66 aa). Residues 173-192 constitute a DNA-binding region (H-T-H motif); it reads NKQIAYNLDIAETTVKAHVS.

In terms of biological role, positive activator for glycerol metabolism. Regulates the expression of qedA in a positive manner and governs the expression of ADH I and ADH IIB. General regulator of quinoprotein ethanol oxidation and affects expression of ADH IIG activity but is not the sole regulator. This is Glycerol metabolism activator from Pseudomonas putida (Arthrobacter siderocapsulatus).